Here is a 396-residue protein sequence, read N- to C-terminus: Tryptophan synthase beta chain (396 aa).

An N6-(pyridoxal phosphate)lysine modification is found at Lys-86.

The protein belongs to the TrpB family. As to quaternary structure, tetramer of two alpha and two beta chains. Pyridoxal 5'-phosphate serves as cofactor.

It catalyses the reaction (1S,2R)-1-C-(indol-3-yl)glycerol 3-phosphate + L-serine = D-glyceraldehyde 3-phosphate + L-tryptophan + H2O. Its pathway is amino-acid biosynthesis; L-tryptophan biosynthesis; L-tryptophan from chorismate: step 5/5. The beta subunit is responsible for the synthesis of L-tryptophan from indole and L-serine. The chain is Tryptophan synthase beta chain from Pectobacterium carotovorum subsp. carotovorum (strain PC1).